Consider the following 119-residue polypeptide: Large ribosomal subunit protein bL17 (119 aa).

Belongs to the bacterial ribosomal protein bL17 family. As to quaternary structure, part of the 50S ribosomal subunit. Contacts protein L32.

The chain is Large ribosomal subunit protein bL17 from Acholeplasma laidlawii (strain PG-8A).